The chain runs to 227 residues: Cytochrome c oxidase subunit 2 (227 aa).

Residues 1–14 lie on the Mitochondrial intermembrane side of the membrane; the sequence is MAYPFQLGLQDATS. The chain crosses the membrane as a helical span at residues 15–45; the sequence is PIMEELTNFHDHTLMIVFLISTLVLYIISLM. At 46–59 the chain is on the mitochondrial matrix side; sequence LTTKLTHTSTMDAQ. A helical membrane pass occupies residues 60 to 87; the sequence is EVETIWTILPAVILILIALPSLRILYMM. Topologically, residues 88-227 are mitochondrial intermembrane; that stretch reads DEINNPALTV…YFEDWSASMI (140 aa). Cu cation-binding residues include His161, Cys196, Glu198, Cys200, His204, and Met207. Glu198 provides a ligand contact to Mg(2+). Residue Tyr218 is modified to Phosphotyrosine.

It belongs to the cytochrome c oxidase subunit 2 family. As to quaternary structure, component of the cytochrome c oxidase (complex IV, CIV), a multisubunit enzyme composed of 14 subunits. The complex is composed of a catalytic core of 3 subunits MT-CO1, MT-CO2 and MT-CO3, encoded in the mitochondrial DNA, and 11 supernumerary subunits COX4I, COX5A, COX5B, COX6A, COX6B, COX6C, COX7A, COX7B, COX7C, COX8 and NDUFA4, which are encoded in the nuclear genome. The complex exists as a monomer or a dimer and forms supercomplexes (SCs) in the inner mitochondrial membrane with NADH-ubiquinone oxidoreductase (complex I, CI) and ubiquinol-cytochrome c oxidoreductase (cytochrome b-c1 complex, complex III, CIII), resulting in different assemblies (supercomplex SCI(1)III(2)IV(1) and megacomplex MCI(2)III(2)IV(2)). Found in a complex with TMEM177, COA6, COX18, COX20, SCO1 and SCO2. Interacts with TMEM177 in a COX20-dependent manner. Interacts with COX20. Interacts with COX16. Requires Cu cation as cofactor.

Its subcellular location is the mitochondrion inner membrane. It carries out the reaction 4 Fe(II)-[cytochrome c] + O2 + 8 H(+)(in) = 4 Fe(III)-[cytochrome c] + 2 H2O + 4 H(+)(out). Functionally, component of the cytochrome c oxidase, the last enzyme in the mitochondrial electron transport chain which drives oxidative phosphorylation. The respiratory chain contains 3 multisubunit complexes succinate dehydrogenase (complex II, CII), ubiquinol-cytochrome c oxidoreductase (cytochrome b-c1 complex, complex III, CIII) and cytochrome c oxidase (complex IV, CIV), that cooperate to transfer electrons derived from NADH and succinate to molecular oxygen, creating an electrochemical gradient over the inner membrane that drives transmembrane transport and the ATP synthase. Cytochrome c oxidase is the component of the respiratory chain that catalyzes the reduction of oxygen to water. Electrons originating from reduced cytochrome c in the intermembrane space (IMS) are transferred via the dinuclear copper A center (CU(A)) of subunit 2 and heme A of subunit 1 to the active site in subunit 1, a binuclear center (BNC) formed by heme A3 and copper B (CU(B)). The BNC reduces molecular oxygen to 2 water molecules using 4 electrons from cytochrome c in the IMS and 4 protons from the mitochondrial matrix. In Hybomys univittatus (Peter's striped mouse), this protein is Cytochrome c oxidase subunit 2 (MT-CO2).